The primary structure comprises 143 residues: Oxoglutarate dehydrogenase inhibitor (143 aa).

A Phosphothreonine modification is found at Thr-14. In terms of domain architecture, FHA spans 68–117 (TTAGRHPESDIFLDDVTVSRRHAEFRINEGEFEVVDVGSLNGTYVNREPR).

The protein localises to the cytoplasm. An essential component of the PknG signaling pathway. When unphosphorylated, it inhibits the activity of 2-oxoglutarate dehydrogenase. When phosphorylated it does not inhibit 2-oxoglutarate dehydrogenase. The sequence is that of Oxoglutarate dehydrogenase inhibitor (odhI) from Corynebacterium glutamicum (strain ATCC 13032 / DSM 20300 / JCM 1318 / BCRC 11384 / CCUG 27702 / LMG 3730 / NBRC 12168 / NCIMB 10025 / NRRL B-2784 / 534).